Reading from the N-terminus, the 371-residue chain is Cyanide hydratase (371 aa).

The region spanning 8–286 (YKAAAVQAEP…EGLMFVEIDL (279 aa)) is the CN hydrolase domain. The active-site Proton acceptor is E48. The active site involves K130. Catalysis depends on C165, which acts as the Nucleophile. The disordered stretch occupies residues 326–356 (DGGIGTYNTQDRVGLNRPLDAPKVDGPSGVS).

The protein belongs to the carbon-nitrogen hydrolase superfamily. Nitrilase family. In terms of assembly, oligomer of dimers, forming left-handed helical fibers.

The enzyme catalyses formamide = hydrogen cyanide + H2O. Functionally, catalyzes the hydration of cyanide to formamide. Degradation of cyanide may be important for plant pathogenic fungi in infection of cyanogenic plants. Can also transform some nitriles like 2-cyanopyridine and fumaronitrile and has a minor activity with 4-cyanophenyl acetonitrile (4-CPA). The protein is Cyanide hydratase of Botryotinia fuckeliana (strain T4) (Noble rot fungus).